Reading from the N-terminus, the 1822-residue chain is ADP-ribosylation factor guanine nucleotide-exchange factor sec72 (1822 aa).

2 disordered regions span residues 1–54 (MQDA…NGMD) and 66–126 (DAVV…RASL). At Ser44 the chain carries Phosphoserine. Residues 72–84 (DINTEDSSLSPAK) are compositionally biased toward polar residues. The span at 85 to 110 (QENEKSPEGIEQKYQEEDLKDDKKSN) shows a compositional bias: basic and acidic residues. Phosphoserine is present on residues Ser122 and Ser125. The short motif at 547 to 551 (NYDCD) is the HUS box element. Thr597 carries the post-translational modification Phosphothreonine. Position 653 is a phosphoserine (Ser653). Thr654 carries the post-translational modification Phosphothreonine. The residue at position 669 (Ser669) is a Phosphoserine. Residues 701–889 (QFESNKQRKK…GFVYDDILKN (189 aa)) form the SEC7 domain. The HDS1 domain stretch occupies residues 898–1106 (ELAAIAPLMN…NARVRRKNVN (209 aa)). Ser1110 carries the post-translational modification Phosphoserine. Disordered stretches follow at residues 1111–1131 (NSIR…SLSK) and 1584–1610 (ENEN…TSSI). Composition is skewed to low complexity over residues 1117-1130 (SGST…RSLS) and 1597-1610 (SLPE…TSSI). Phosphoserine is present on residues Ser1606 and Ser1609.

Its subcellular location is the cytoplasm. It is found in the golgi apparatus. The protein resides in the trans-Golgi network. The protein localises to the cytoplasmic vesicle. It localises to the COPI-coated vesicle membrane. Its subcellular location is the COPII-coated vesicle membrane. Functionally, guanine exchange factor that acts as an activator of arf1 at the trans-Golgi net-work and is thus involved in vesicular budding and traffic between compartments of the Golgi apparatus. Activation of Arf (ADP-ribosylation factor) GTPases is essential for vesicle formation via recruitment of cargo adapters and coat proteins necessary for Golgi trafficking. Involved in the resistance to tamoxifen (TAM), an anticancer drug used to treat estrogen receptor (ER)-positive breast cancer. This is ADP-ribosylation factor guanine nucleotide-exchange factor sec72 from Schizosaccharomyces pombe (strain 972 / ATCC 24843) (Fission yeast).